A 134-amino-acid chain; its full sequence is Small ribosomal subunit protein uS8c (134 aa).

Belongs to the universal ribosomal protein uS8 family. Part of the 30S ribosomal subunit.

It is found in the plastid. Its function is as follows. One of the primary rRNA binding proteins, it binds directly to 16S rRNA central domain where it helps coordinate assembly of the platform of the 30S subunit. The protein is Small ribosomal subunit protein uS8c (rps8) of Cuscuta gronovii (Common dodder).